The sequence spans 146 residues: Large ribosomal subunit protein uL23m (146 aa).

The tract at residues 108-138 (PDLFPEKDPRSPEPLEEELPQQRQSSDLRCP) is disordered. Residues 111-120 (FPEKDPRSPE) show a composition bias toward basic and acidic residues.

The protein belongs to the universal ribosomal protein uL23 family. In terms of assembly, component of the mitochondrial ribosome large subunit (39S) which comprises a 16S rRNA and about 50 distinct proteins.

The protein resides in the mitochondrion. The sequence is that of Large ribosomal subunit protein uL23m (Mrpl23) from Mus musculus (Mouse).